The following is a 167-amino-acid chain: NADH-quinone oxidoreductase subunit B (167 aa).

[4Fe-4S] cluster contacts are provided by Cys40, Cys41, Cys105, and Cys135.

This sequence belongs to the complex I 20 kDa subunit family. As to quaternary structure, NDH-1 is composed of 14 different subunits. Subunits NuoB, C, D, E, F, and G constitute the peripheral sector of the complex. [4Fe-4S] cluster serves as cofactor.

Its subcellular location is the cell inner membrane. It carries out the reaction a quinone + NADH + 5 H(+)(in) = a quinol + NAD(+) + 4 H(+)(out). NDH-1 shuttles electrons from NADH, via FMN and iron-sulfur (Fe-S) centers, to quinones in the respiratory chain. The immediate electron acceptor for the enzyme in this species is believed to be ubiquinone. Couples the redox reaction to proton translocation (for every two electrons transferred, four hydrogen ions are translocated across the cytoplasmic membrane), and thus conserves the redox energy in a proton gradient. The sequence is that of NADH-quinone oxidoreductase subunit B from Magnetococcus marinus (strain ATCC BAA-1437 / JCM 17883 / MC-1).